The chain runs to 54 residues: Ovomucoid (54 aa).

In terms of domain architecture, Kazal-like spans 4–54 (VDCSEYPKPACTLEYRPLCGSDSKTYGNKCNFCNAVVESNGTLTLSHFGKC). Disulfide bonds link cysteine 6/cysteine 36, cysteine 14/cysteine 33, and cysteine 22/cysteine 54. A glycan (N-linked (GlcNAc...) asparagine) is linked at asparagine 43.

It localises to the secreted. The sequence is that of Ovomucoid from Alectoris chukar (Chukar partridge).